A 499-amino-acid chain; its full sequence is Lanosterol 14-alpha demethylase (499 aa).

Residues 13–35 (SAVLQMSLTSVLLTASVFTLTLG) form a helical membrane-spanning segment. Position 441 (Cys441) interacts with heme.

The protein belongs to the cytochrome P450 family. The cofactor is heme. As to expression, strongly expressed in intestine. Moderately expressed in liver, with higher levels in females compared to males. Also detected at low levels in brain, eye, kidney and testis.

Its subcellular location is the endoplasmic reticulum membrane. It localises to the membrane. It catalyses the reaction a 14alpha-methyl steroid + 3 reduced [NADPH--hemoprotein reductase] + 3 O2 = a Delta(14) steroid + formate + 3 oxidized [NADPH--hemoprotein reductase] + 4 H2O + 4 H(+). The catalysed reaction is lanosterol + 3 reduced [NADPH--hemoprotein reductase] + 3 O2 = 4,4-dimethyl-5alpha-cholesta-8,14,24-trien-3beta-ol + formate + 3 oxidized [NADPH--hemoprotein reductase] + 4 H2O + 4 H(+). The enzyme catalyses 24,25-dihydrolanosterol + 3 reduced [NADPH--hemoprotein reductase] + 3 O2 = 4,4-dimethyl-8,14-cholestadien-3beta-ol + formate + 3 oxidized [NADPH--hemoprotein reductase] + 4 H2O + 4 H(+). It carries out the reaction a 14alpha-methyl steroid + reduced [NADPH--hemoprotein reductase] + O2 = a 14alpha-hydroxymethyl steroid + oxidized [NADPH--hemoprotein reductase] + H2O + H(+). It catalyses the reaction a 14alpha-hydroxymethyl steroid + reduced [NADPH--hemoprotein reductase] + O2 = a 14alpha-formyl steroid + oxidized [NADPH--hemoprotein reductase] + 2 H2O + H(+). The catalysed reaction is a 14alpha-formyl steroid + reduced [NADPH--hemoprotein reductase] + O2 = a Delta(14) steroid + formate + oxidized [NADPH--hemoprotein reductase] + H2O + 2 H(+). The enzyme catalyses lanosterol + reduced [NADPH--hemoprotein reductase] + O2 = 32-hydroxylanosterol + oxidized [NADPH--hemoprotein reductase] + H2O + H(+). It carries out the reaction 32-hydroxylanosterol + reduced [NADPH--hemoprotein reductase] + O2 = 32-oxolanosterol + oxidized [NADPH--hemoprotein reductase] + 2 H2O + H(+). It catalyses the reaction 32-oxolanosterol + reduced [NADPH--hemoprotein reductase] + O2 = 4,4-dimethyl-5alpha-cholesta-8,14,24-trien-3beta-ol + formate + oxidized [NADPH--hemoprotein reductase] + H2O + 2 H(+). The catalysed reaction is 24,25-dihydrolanosterol + reduced [NADPH--hemoprotein reductase] + O2 = 32-hydroxy-24,25-dihydrolanosterol + oxidized [NADPH--hemoprotein reductase] + H2O + H(+). The enzyme catalyses 32-hydroxy-24,25-dihydrolanosterol + reduced [NADPH--hemoprotein reductase] + O2 = 32-oxo-24,25-dihydrolanosterol + oxidized [NADPH--hemoprotein reductase] + 2 H2O + H(+). It carries out the reaction 32-oxo-24,25-dihydrolanosterol + reduced [NADPH--hemoprotein reductase] + O2 = 4,4-dimethyl-8,14-cholestadien-3beta-ol + formate + oxidized [NADPH--hemoprotein reductase] + H2O + 2 H(+). It functions in the pathway steroid biosynthesis; zymosterol biosynthesis; zymosterol from lanosterol: step 1/6. Inhibited by ketoconazole. May also be inhibited to a lesser extent by propiconazole. Its function is as follows. Sterol 14alpha-demethylase that plays a critical role in the cholesterol biosynthesis pathway, being cholesterol the major sterol component in deuterostome membranes as well as a precursor for steroid hormone synthesis. Cytochrome P450 monooxygenase that catalyzes the three-step oxidative removal of the 14alpha-methyl group (C-32) of sterols such as lanosterol (lanosta-8,24-dien-3beta-ol) and 24,25-dihydrolanosterol (DHL) in the form of formate, and converts the sterols to 4,4-dimethyl-5alpha-cholesta-8,14,24-trien-3beta-ol and 4,4-dimethyl-8,14-cholestadien-3beta-ol, respectively, which are intermediates of cholesterol biosynthesis. Can also demethylate substrates not intrinsic to deuterostomes, such as eburicol (24-methylene-24,25-dihydrolanosterol), but at a lower rate than DHL. The protein is Lanosterol 14-alpha demethylase of Danio rerio (Zebrafish).